The chain runs to 84 residues: Cytochrome b559 subunit alpha (84 aa).

The chain crosses the membrane as a helical span at residues 21 to 35 (VIHSITIPSLFIAGW). His-23 is a binding site for heme.

The protein belongs to the PsbE/PsbF family. In terms of assembly, heterodimer of an alpha subunit and a beta subunit. PSII is composed of 1 copy each of membrane proteins PsbA, PsbB, PsbC, PsbD, PsbE, PsbF, PsbH, PsbI, PsbJ, PsbK, PsbL, PsbM, PsbT, PsbX, PsbY, PsbZ, Psb30/Ycf12, at least 3 peripheral proteins of the oxygen-evolving complex and a large number of cofactors. It forms dimeric complexes. Requires heme b as cofactor.

The protein resides in the plastid membrane. In terms of biological role, this b-type cytochrome is tightly associated with the reaction center of photosystem II (PSII). PSII is a light-driven water:plastoquinone oxidoreductase that uses light energy to abstract electrons from H(2)O, generating O(2) and a proton gradient subsequently used for ATP formation. It consists of a core antenna complex that captures photons, and an electron transfer chain that converts photonic excitation into a charge separation. The chain is Cytochrome b559 subunit alpha from Cuscuta gronovii (Common dodder).